Consider the following 70-residue polypeptide: Guanine nucleotide-binding protein subunit gamma-1 (70 aa).

At Cys67 the chain carries Cysteine methyl ester. Cys67 carries the S-geranylgeranyl cysteine lipid modification. The propeptide at 68–70 (TVL) is removed in mature form.

The protein belongs to the G protein gamma family. G proteins are composed of 3 units, alpha, beta and gamma. Predominantly expressed in the central nervous system.

Its subcellular location is the cell membrane. Its function is as follows. Guanine nucleotide-binding proteins (G proteins) are involved as a modulator or transducer in various transmembrane signaling systems. The beta and gamma chains are required for the GTPase activity, for replacement of GDP by GTP, and for G protein-effector interaction. The protein is Guanine nucleotide-binding protein subunit gamma-1 (Ggamma1) of Drosophila melanogaster (Fruit fly).